The chain runs to 157 residues: Large ribosomal subunit protein uL22 (157 aa).

It belongs to the universal ribosomal protein uL22 family. Part of the 50S ribosomal subunit.

In terms of biological role, this protein binds specifically to 23S rRNA. It makes multiple contacts with different domains of the 23S rRNA in the assembled 50S subunit and ribosome. The globular domain of the protein is located near the polypeptide exit tunnel on the outside of the subunit, while an extended beta-hairpin is found that lines the wall of the exit tunnel in the center of the 70S ribosome. The polypeptide is Large ribosomal subunit protein uL22 (Staphylothermus marinus (strain ATCC 43588 / DSM 3639 / JCM 9404 / F1)).